The following is a 156-amino-acid chain: Deoxyuridine 5'-triphosphate nucleotidohydrolase (156 aa).

Substrate-binding positions include 76–78 (RSG), N89, 93–95 (TVD), and K103.

It belongs to the dUTPase family. Requires Mg(2+) as cofactor.

It carries out the reaction dUTP + H2O = dUMP + diphosphate + H(+). Its pathway is pyrimidine metabolism; dUMP biosynthesis; dUMP from dCTP (dUTP route): step 2/2. Functionally, this enzyme is involved in nucleotide metabolism: it produces dUMP, the immediate precursor of thymidine nucleotides and it decreases the intracellular concentration of dUTP so that uracil cannot be incorporated into DNA. The chain is Deoxyuridine 5'-triphosphate nucleotidohydrolase from Agrobacterium fabrum (strain C58 / ATCC 33970) (Agrobacterium tumefaciens (strain C58)).